A 425-amino-acid chain; its full sequence is Serine--tRNA ligase (425 aa).

230–232 (TAE) is an L-serine binding site. Position 261–263 (261–263 (RSE)) interacts with ATP. Position 284 (Glu284) interacts with L-serine. 348–351 (EISS) provides a ligand contact to ATP. Residue Ser383 coordinates L-serine.

It belongs to the class-II aminoacyl-tRNA synthetase family. Type-1 seryl-tRNA synthetase subfamily. As to quaternary structure, homodimer. The tRNA molecule binds across the dimer.

The protein localises to the cytoplasm. It carries out the reaction tRNA(Ser) + L-serine + ATP = L-seryl-tRNA(Ser) + AMP + diphosphate + H(+). The catalysed reaction is tRNA(Sec) + L-serine + ATP = L-seryl-tRNA(Sec) + AMP + diphosphate + H(+). It functions in the pathway aminoacyl-tRNA biosynthesis; selenocysteinyl-tRNA(Sec) biosynthesis; L-seryl-tRNA(Sec) from L-serine and tRNA(Sec): step 1/1. Its function is as follows. Catalyzes the attachment of serine to tRNA(Ser). Is also able to aminoacylate tRNA(Sec) with serine, to form the misacylated tRNA L-seryl-tRNA(Sec), which will be further converted into selenocysteinyl-tRNA(Sec). The protein is Serine--tRNA ligase of Ligilactobacillus salivarius (strain UCC118) (Lactobacillus salivarius).